A 501-amino-acid chain; its full sequence is Histidine--tRNA ligase (501 aa).

The protein belongs to the class-II aminoacyl-tRNA synthetase family. Homodimer.

Its subcellular location is the cytoplasm. The enzyme catalyses tRNA(His) + L-histidine + ATP = L-histidyl-tRNA(His) + AMP + diphosphate + H(+). This is Histidine--tRNA ligase from Methylocella silvestris (strain DSM 15510 / CIP 108128 / LMG 27833 / NCIMB 13906 / BL2).